Here is a 112-residue protein sequence, read N- to C-terminus: uncharacterized protein (112 aa).

Over residues 1–11 (MAESVASSESL) the composition is skewed to polar residues. Residues 1–32 (MAESVASSESLPQMKPEEPESKKSPSREAIPK) form a disordered region. Residues 15–31 (KPEEPESKKSPSREAIP) show a composition bias toward basic and acidic residues. A helical transmembrane segment spans residues 81-101 (VVFIFMIAIMSMLVIGLVVCG).

The protein localises to the membrane. This is an uncharacterized protein from Encephalitozoon cuniculi (strain GB-M1) (Microsporidian parasite).